A 424-amino-acid chain; its full sequence is Probable ribonuclease FAU-1 (424 aa).

It belongs to the FAU-1 family.

Its function is as follows. Probable RNase involved in rRNA stability through maturation and/or degradation of precursor rRNAs. Binds to RNA in loop regions with AU-rich sequences. The chain is Probable ribonuclease FAU-1 from Saccharolobus islandicus (strain Y.G.57.14 / Yellowstone #1) (Sulfolobus islandicus).